The chain runs to 424 residues: Enolase (424 aa).

Position 163 (Gln163) interacts with (2R)-2-phosphoglycerate. The active-site Proton donor is Glu205. Mg(2+) contacts are provided by Asp242, Glu285, and Asp312. Residues Lys337, Arg366, Ser367, and Lys388 each coordinate (2R)-2-phosphoglycerate. The active-site Proton acceptor is the Lys337.

The protein belongs to the enolase family. It depends on Mg(2+) as a cofactor.

The protein localises to the cytoplasm. Its subcellular location is the secreted. It localises to the cell surface. It catalyses the reaction (2R)-2-phosphoglycerate = phosphoenolpyruvate + H2O. It participates in carbohydrate degradation; glycolysis; pyruvate from D-glyceraldehyde 3-phosphate: step 4/5. Catalyzes the reversible conversion of 2-phosphoglycerate (2-PG) into phosphoenolpyruvate (PEP). It is essential for the degradation of carbohydrates via glycolysis. This Sphingopyxis alaskensis (strain DSM 13593 / LMG 18877 / RB2256) (Sphingomonas alaskensis) protein is Enolase.